A 359-amino-acid polypeptide reads, in one-letter code: 1-deoxy-D-xylulose 5-phosphate reductoisomerase (359 aa).

Positions 7, 8, 9, 10, 31, 32, 33, and 111 each coordinate NADPH. Lysine 112 provides a ligand contact to 1-deoxy-D-xylulose 5-phosphate. An NADPH-binding site is contributed by glutamate 113. Residue aspartate 131 coordinates Mn(2+). The 1-deoxy-D-xylulose 5-phosphate site is built by serine 132, glutamate 133, serine 155, and histidine 178. Glutamate 133 lines the Mn(2+) pocket. Residue glycine 184 participates in NADPH binding. 1-deoxy-D-xylulose 5-phosphate-binding residues include serine 191, asparagine 196, lysine 197, and glutamate 200. Position 200 (glutamate 200) interacts with Mn(2+).

This sequence belongs to the DXR family. It depends on Mg(2+) as a cofactor. Mn(2+) is required as a cofactor.

The enzyme catalyses 2-C-methyl-D-erythritol 4-phosphate + NADP(+) = 1-deoxy-D-xylulose 5-phosphate + NADPH + H(+). The protein operates within isoprenoid biosynthesis; isopentenyl diphosphate biosynthesis via DXP pathway; isopentenyl diphosphate from 1-deoxy-D-xylulose 5-phosphate: step 1/6. Its function is as follows. Catalyzes the NADPH-dependent rearrangement and reduction of 1-deoxy-D-xylulose-5-phosphate (DXP) to 2-C-methyl-D-erythritol 4-phosphate (MEP). The chain is 1-deoxy-D-xylulose 5-phosphate reductoisomerase from Campylobacter lari (strain RM2100 / D67 / ATCC BAA-1060).